The following is a 286-amino-acid chain: KH domain-containing protein At2g38610 (286 aa).

An N-acetylserine modification is found at serine 2. Positions 141-208 (EIPVDNYPNF…EHLNEQLHIL (68 aa)) constitute a KH domain. Positions 256 to 286 (SNNLREESPGPSGGGSVSPFNSSGKRPKTGC) are disordered. Serine 263 and serine 273 each carry phosphoserine.

Its subcellular location is the nucleus. This Arabidopsis thaliana (Mouse-ear cress) protein is KH domain-containing protein At2g38610.